The following is a 140-amino-acid chain: Gonadotropin subunit beta-2 (140 aa).

The N-terminal stretch at 1-24 is a signal peptide; the sequence is MSVYPECTWLLFVCLCHLLVSAGG. 6 cysteine pairs are disulfide-bonded: C30–C78, C44–C93, C47–C131, C55–C109, C59–C111, and C114–C121. N34 is a glycosylation site (N-linked (GlcNAc...) asparagine).

Belongs to the glycoprotein hormones subunit beta family. As to quaternary structure, heterodimer of an alpha and a beta chain.

It localises to the secreted. Involved in gametogenesis and steroidogenesis. In Anguilla anguilla (European freshwater eel), this protein is Gonadotropin subunit beta-2 (cgbb).